The sequence spans 441 residues: Amino-acid acetyltransferase (441 aa).

The N-acetyltransferase domain occupies 295 to 434; the sequence is EQVRRATIND…QALYNYQRRS (140 aa).

The protein belongs to the acetyltransferase family. ArgA subfamily. As to quaternary structure, homohexamer.

The protein localises to the cytoplasm. It carries out the reaction L-glutamate + acetyl-CoA = N-acetyl-L-glutamate + CoA + H(+). It participates in amino-acid biosynthesis; L-arginine biosynthesis; N(2)-acetyl-L-ornithine from L-glutamate: step 1/4. The chain is Amino-acid acetyltransferase from Pectobacterium atrosepticum (strain SCRI 1043 / ATCC BAA-672) (Erwinia carotovora subsp. atroseptica).